Consider the following 267-residue polypeptide: Tryptophan synthase alpha chain (267 aa).

Residues Glu-49 and Asp-60 each act as proton acceptor in the active site.

Belongs to the TrpA family. In terms of assembly, tetramer of two alpha and two beta chains.

The catalysed reaction is (1S,2R)-1-C-(indol-3-yl)glycerol 3-phosphate + L-serine = D-glyceraldehyde 3-phosphate + L-tryptophan + H2O. It functions in the pathway amino-acid biosynthesis; L-tryptophan biosynthesis; L-tryptophan from chorismate: step 5/5. Functionally, the alpha subunit is responsible for the aldol cleavage of indoleglycerol phosphate to indole and glyceraldehyde 3-phosphate. In Chloroflexus aggregans (strain MD-66 / DSM 9485), this protein is Tryptophan synthase alpha chain.